The primary structure comprises 345 residues: Protein GAMETE CELL DEFECTIVE 1, mitochondrial (345 aa).

A mitochondrion-targeting transit peptide spans 1 to 43 (MLALRKTLLHGRLPAAPPAAAAAAIASRIPALLRRLSSSPGDG). Residues 36–81 (LSSSPGDGQGGDEWGSSWSTGITKEHFDGSDAAVGRPVTSPSKPVS) form a disordered region.

As to expression, expressed in roots, stems, leaves and florets.

It is found in the mitochondrion. Functionally, essential for fertility (male and female gametophyte functions and development). Required for the integrity of female gametic mitochondria. Involved in embryo apical-basal patterning, and particularly dorsal-ventral patterning, during early embryogenesis, and endosperm free nucleus positioning and development as well as early endosperm development, probably by modulating the expression pattern of related genes (e.g. AL1, MYB3/AL2, CYP78A13/GE, PNH1, HAZ1, MPK6 and OSH1). Has function in triggering of endosperm programmed cell death (PCD) leading to syncytial endosperm cellularization and starchy endosperm cell maturation. Implicated in central vacuole dynamics necessary for microspore development leading to pollen production, and for pollen development and germination. This chain is Protein GAMETE CELL DEFECTIVE 1, mitochondrial, found in Oryza sativa subsp. japonica (Rice).